The chain runs to 328 residues: Tryptophan--tRNA ligase (328 aa).

ATP contacts are provided by residues Gln11–Thr13 and Gly19–Asn20. The 'HIGH' region signature appears at Pro12–Asn20. Asp135 contributes to the L-tryptophan binding site. ATP is bound by residues Gly147 to Asp149, Ile186, and Lys195 to Ser199. Residues Lys195 to Ser199 carry the 'KMSKS' region motif.

The protein belongs to the class-I aminoacyl-tRNA synthetase family. In terms of assembly, homodimer.

It localises to the cytoplasm. The catalysed reaction is tRNA(Trp) + L-tryptophan + ATP = L-tryptophyl-tRNA(Trp) + AMP + diphosphate + H(+). Functionally, catalyzes the attachment of tryptophan to tRNA(Trp). This is Tryptophan--tRNA ligase from Wolinella succinogenes (strain ATCC 29543 / DSM 1740 / CCUG 13145 / JCM 31913 / LMG 7466 / NCTC 11488 / FDC 602W) (Vibrio succinogenes).